A 476-amino-acid polypeptide reads, in one-letter code: Surface membrane glycoprotein GP46/M-2 (476 aa).

The first 32 residues, 1-32 (MAQCVRRLVLAAPLAAVVALLLCTSSAPVARA), serve as a signal peptide directing secretion. 4 consecutive repeat copies span residues 107-130 (VMIL…PSWS), 131-154 (SMKH…PEWS), 155-178 (EMTS…TSWS), and 179-202 (SMPK…DSWR). A 4 X 24 AA tandem repeats region spans residues 107-202 (VMILALDFGA…FCGCVPDSWR (96 aa)). Disordered regions lie at residues 231 to 255 (APGT…PSPG) and 348 to 370 (ALSP…RRRA). The GPI-anchor amidated cysteine moiety is linked to residue C452. Residues 453 to 476 (PALFDGARLRCCALVVCAGAAPAG) constitute a propeptide, removed in mature form.

The protein localises to the cell membrane. This is Surface membrane glycoprotein GP46/M-2 from Leishmania amazonensis.